We begin with the raw amino-acid sequence, 69 residues long: Toxin Lc a (69 aa).

Cystine bridges form between Cys3-Cys20, Cys13-Cys41, Cys45-Cys56, and Cys57-Cys62.

The protein belongs to the three-finger toxin family. Long-chain subfamily. Type II alpha-neurotoxin sub-subfamily. In terms of tissue distribution, expressed by the venom gland.

The protein resides in the secreted. In terms of biological role, binds with high affinity to muscular nicotinic acetylcholine receptors (nAChRs), whereas it binds with a low affinity to neuronal alpha-7/CHRNA7 nAChRs. This is Toxin Lc a from Laticauda colubrina (Yellow-lipped sea krait).